Reading from the N-terminus, the 376-residue chain is Phosphoglycerate kinase (376 aa).

Positions 1, 2, 3, 4, 17, 40, 41, 43, 44, 99, 100, 147, and 148 each coordinate (2R)-3-phosphoglycerate. Gly191 contacts ADP. Position 191 (Gly191) interacts with CDP. AMP contacts are provided by Ala192 and Lys193. ATP is bound at residue Ala192. Ala192 serves as a coordination point for Mg(2+). Residue Asp196 participates in CDP binding. Asp196 lines the Mg(2+) pocket. Lys197 contributes to the AMP binding site. Lys197 serves as a coordination point for ATP. Residue Gly215 coordinates ADP. Gly215 contributes to the CDP binding site. AMP is bound by residues Gly216 and Gly290. ATP is bound by residues Gly216 and Gly290. 2 residues coordinate CDP: Gly315 and Phe320. An ADP-binding site is contributed by Phe320. Residue Glu321 coordinates AMP. Residues Glu321, Asp352, and Thr353 each coordinate ATP. Asp352 provides a ligand contact to Mg(2+).

Belongs to the phosphoglycerate kinase family. Monomer. The cofactor is Mg(2+).

The enzyme catalyses (2R)-3-phosphoglycerate + ATP = (2R)-3-phospho-glyceroyl phosphate + ADP. It participates in carbohydrate degradation; glycolysis; pyruvate from D-glyceraldehyde 3-phosphate: step 2/5. The protein is Phosphoglycerate kinase (PGK) of Glaucoma chattoni.